The sequence spans 102 residues: Large ribosomal subunit protein uL24 (102 aa).

Belongs to the universal ribosomal protein uL24 family. Part of the 50S ribosomal subunit.

Functionally, one of two assembly initiator proteins, it binds directly to the 5'-end of the 23S rRNA, where it nucleates assembly of the 50S subunit. One of the proteins that surrounds the polypeptide exit tunnel on the outside of the subunit. This Macrococcus caseolyticus (strain JCSC5402) (Macrococcoides caseolyticum) protein is Large ribosomal subunit protein uL24.